The sequence spans 233 residues: Orotidine 5'-phosphate decarboxylase (233 aa).

Residues D9, K31, 58-67 (DLKLHDIPNT), T120, R182, Q191, G211, and R212 contribute to the substrate site. K60 functions as the Proton donor in the catalytic mechanism.

It belongs to the OMP decarboxylase family. Type 1 subfamily. Homodimer.

The enzyme catalyses orotidine 5'-phosphate + H(+) = UMP + CO2. The protein operates within pyrimidine metabolism; UMP biosynthesis via de novo pathway; UMP from orotate: step 2/2. In terms of biological role, catalyzes the decarboxylation of orotidine 5'-monophosphate (OMP) to uridine 5'-monophosphate (UMP). The polypeptide is Orotidine 5'-phosphate decarboxylase (Listeria monocytogenes serotype 4a (strain HCC23)).